We begin with the raw amino-acid sequence, 560 residues long: MKEAIIEWKDFSFRYETQQEPTLQGIDLTIYKGEKVLIVGPSGSGKSTLGQCLNGIIPNIYKGQTYGEFLIKGQVAFDMSIYDKSHLVSTVLQDTDGQFIGLSVAEDLAFALENDVTALDEMKGRVYKWAEKLDLLPLLDQRPQDLSGGQKQRVSLAGVLIDESPILLFDEPLANLDPKSGQDIIELIDQIHKEEGTTTLIIEHRLEDVLHRPVDRIVLINDGRILFNGSPDQLLATDLLTQNGIREPLYLTTLRQLGVDLVKEEQLANLDNLSISKGQVQLQNELAKETPALQSLFRLEEVSFSYDDRPILKSLHLDIKKGEKIAIVGKNGAGKSTLAKAISSFIQTEGRYLWEKQDIKGDSVAERAERVGYVLQNPNQMISTNMIFDEVALGLRLRGVDEKEIETRVYETLKICGLYEFRNWPISALSFGQKKRVTIASILVLGAEIILLDEPTAGQDQKNYTEIMEFLEELHQKGHTIVMITHDMQLMLDYSDRVLVMVDGELIADTVPASLLSDPELLVKANLKETSIFNLAKKLDVDPLDLTAFYKERREGCKLN.

ABC transporter domains follow at residues 6–247 (IEWK…GIRE) and 297–528 (FRLE…ANLK). ATP is bound by residues 40-47 (GPSGSGKS) and 329-336 (GKNGAGKS).

This sequence belongs to the ABC transporter superfamily.

The protein localises to the cell membrane. Functionally, probably part of an ABC transporter complex. Responsible for energy coupling to the transport system. This chain is Putative ABC transporter ATP-binding protein SP_0483, found in Streptococcus pneumoniae serotype 4 (strain ATCC BAA-334 / TIGR4).